A 158-amino-acid polypeptide reads, in one-letter code: Superoxide dismutase [Cu-Zn] (158 aa).

Cu cation contacts are provided by histidine 46, histidine 48, and histidine 63. A disulfide bridge links cysteine 57 with cysteine 149. Positions 63, 71, 80, and 83 each coordinate Zn(2+). Residue histidine 120 coordinates Cu cation.

This sequence belongs to the Cu-Zn superoxide dismutase family. Homodimer. Cu cation serves as cofactor. It depends on Zn(2+) as a cofactor.

Its subcellular location is the cytoplasm. The enzyme catalyses 2 superoxide + 2 H(+) = H2O2 + O2. In terms of biological role, destroys radicals which are normally produced within the cells and which are toxic to biological systems. The protein is Superoxide dismutase [Cu-Zn] (SODC) of Brugia pahangi (Filarial nematode worm).